The primary structure comprises 311 residues: Aspartate carbamoyltransferase catalytic subunit (311 aa).

Arg58 and Thr59 together coordinate carbamoyl phosphate. Residue Lys86 coordinates L-aspartate. Residues Arg108, His136, and Gln139 each contribute to the carbamoyl phosphate site. Residues Arg169 and Arg224 each contribute to the L-aspartate site. Gly265 and Pro266 together coordinate carbamoyl phosphate.

Belongs to the aspartate/ornithine carbamoyltransferase superfamily. ATCase family. Heterododecamer (2C3:3R2) of six catalytic PyrB chains organized as two trimers (C3), and six regulatory PyrI chains organized as three dimers (R2).

The enzyme catalyses carbamoyl phosphate + L-aspartate = N-carbamoyl-L-aspartate + phosphate + H(+). It participates in pyrimidine metabolism; UMP biosynthesis via de novo pathway; (S)-dihydroorotate from bicarbonate: step 2/3. Its function is as follows. Catalyzes the condensation of carbamoyl phosphate and aspartate to form carbamoyl aspartate and inorganic phosphate, the committed step in the de novo pyrimidine nucleotide biosynthesis pathway. This chain is Aspartate carbamoyltransferase catalytic subunit, found in Geotalea uraniireducens (strain Rf4) (Geobacter uraniireducens).